We begin with the raw amino-acid sequence, 736 residues long: Phosphoribosylformylglycinamidine synthase subunit PurL (736 aa).

H49 is a catalytic residue. Positions 52 and 91 each coordinate ATP. Mg(2+) is bound at residue E93. Residues 94-97 (SHNH) and R116 each bind substrate. H95 functions as the Proton acceptor in the catalytic mechanism. Position 117 (D117) interacts with Mg(2+). Q240 is a substrate binding site. A Mg(2+)-binding site is contributed by D268. Substrate is bound at residue 312 to 314 (ESQ). The ATP site is built by D493 and G530. Residue N531 coordinates Mg(2+). Position 533 (S533) interacts with substrate.

It belongs to the FGAMS family. Monomer. Part of the FGAM synthase complex composed of 1 PurL, 1 PurQ and 2 PurS subunits.

It localises to the cytoplasm. It catalyses the reaction N(2)-formyl-N(1)-(5-phospho-beta-D-ribosyl)glycinamide + L-glutamine + ATP + H2O = 2-formamido-N(1)-(5-O-phospho-beta-D-ribosyl)acetamidine + L-glutamate + ADP + phosphate + H(+). The protein operates within purine metabolism; IMP biosynthesis via de novo pathway; 5-amino-1-(5-phospho-D-ribosyl)imidazole from N(2)-formyl-N(1)-(5-phospho-D-ribosyl)glycinamide: step 1/2. Part of the phosphoribosylformylglycinamidine synthase complex involved in the purines biosynthetic pathway. Catalyzes the ATP-dependent conversion of formylglycinamide ribonucleotide (FGAR) and glutamine to yield formylglycinamidine ribonucleotide (FGAM) and glutamate. The FGAM synthase complex is composed of three subunits. PurQ produces an ammonia molecule by converting glutamine to glutamate. PurL transfers the ammonia molecule to FGAR to form FGAM in an ATP-dependent manner. PurS interacts with PurQ and PurL and is thought to assist in the transfer of the ammonia molecule from PurQ to PurL. The protein is Phosphoribosylformylglycinamidine synthase subunit PurL of Rhodopseudomonas palustris (strain BisB18).